A 330-amino-acid chain; its full sequence is Ribosomal RNA small subunit methyltransferase C (330 aa).

The protein belongs to the methyltransferase superfamily. RsmC family. In terms of assembly, monomer.

Its subcellular location is the cytoplasm. The enzyme catalyses guanosine(1207) in 16S rRNA + S-adenosyl-L-methionine = N(2)-methylguanosine(1207) in 16S rRNA + S-adenosyl-L-homocysteine + H(+). Functionally, specifically methylates the guanine in position 1207 of 16S rRNA in the 30S particle. In Haemophilus influenzae (strain PittEE), this protein is Ribosomal RNA small subunit methyltransferase C.